The primary structure comprises 399 residues: Elongation factor Tu (399 aa).

In terms of domain architecture, tr-type G spans 10–209 (KPHVNIGTIG…AVDEYIPTPE (200 aa)). Residues 19–26 (GHVDHGKT) are G1. Position 19–26 (19–26 (GHVDHGKT)) interacts with GTP. Thr-26 contacts Mg(2+). The G2 stretch occupies residues 60–64 (GITIN). The tract at residues 81-84 (DCPG) is G3. Residues 81-85 (DCPGH) and 136-139 (NKMD) contribute to the GTP site. A G4 region spans residues 136 to 139 (NKMD). Residues 174 to 176 (SAL) are G5.

This sequence belongs to the TRAFAC class translation factor GTPase superfamily. Classic translation factor GTPase family. EF-Tu/EF-1A subfamily. As to quaternary structure, monomer.

Its subcellular location is the cytoplasm. It catalyses the reaction GTP + H2O = GDP + phosphate + H(+). GTP hydrolase that promotes the GTP-dependent binding of aminoacyl-tRNA to the A-site of ribosomes during protein biosynthesis. This chain is Elongation factor Tu, found in Nautilia profundicola (strain ATCC BAA-1463 / DSM 18972 / AmH).